We begin with the raw amino-acid sequence, 649 residues long: Echinoderm microtubule-associated protein-like 2 (649 aa).

Positions Lys10–Ala649 are tandem atypical propeller in EMLs. WD repeat units lie at residues Lys56–Val93, Arg97–Ser144, His151–Trp192, Glu195–Leu234, Lys241–Lys280, Ile285–Ser323, Phe369–Ser406, Gln410–Thr447, Leu452–Val489, Lys495–Pro535, Phe564–Tyr602, and Ala609–Val648. A coiled-coil region spans residues Gly65–Asp106.

This sequence belongs to the WD repeat EMAP family. In terms of assembly, interacts with GRID2 and may also interact with GRID1. Interacts with EML3. Binds unpolymerized tubulins via its WD repeat region.

It localises to the cytoplasm. The protein localises to the cytoskeleton. Its subcellular location is the spindle. Tubulin binding protein that inhibits microtubule nucleation and growth, resulting in shorter microtubules. The chain is Echinoderm microtubule-associated protein-like 2 (Eml2) from Mus musculus (Mouse).